Reading from the N-terminus, the 86-residue chain is Small ribosomal subunit protein bS20 (86 aa).

The segment at 1–27 is disordered; it reads MANSKQAKKRAGQSEKRRQHNASRRSM.

Belongs to the bacterial ribosomal protein bS20 family.

Functionally, binds directly to 16S ribosomal RNA. In Colwellia psychrerythraea (strain 34H / ATCC BAA-681) (Vibrio psychroerythus), this protein is Small ribosomal subunit protein bS20.